We begin with the raw amino-acid sequence, 514 residues long: Cytochrome P450 monooxygenase verB (514 aa).

Residues 5 to 25 (WLSASVLITAVILLVDYLNYY) traverse the membrane as a helical segment. Residue Cys-457 participates in heme binding.

This sequence belongs to the cytochrome P450 family. The cofactor is heme.

It is found in the membrane. Its pathway is mycotoxin biosynthesis. In terms of biological role, cytochrome P450 monooxygenase; part of the gene cluster that mediates the biosynthesis of 11'-deoxyverticillin A, one of the dimeric epipolythiodioxopiperazines (ETPs) from the verticillin family that act as mycotoxins. 11'-deoxyverticillin A is required for normal conidiation. The nonribosomal peptide synthetase verP is speculated to be responsible for condensation of amino acids to form the carbon skeleton of verticillin, whereas the cluster-specific tailoring enzymes are involved in further modifications leading to the production of 11'-deoxyverticillin A. The polypeptide is Cytochrome P450 monooxygenase verB (Clonostachys rogersoniana).